Here is a 151-residue protein sequence, read N- to C-terminus: UPF0208 membrane protein YE1335 (151 aa).

2 helical membrane-spanning segments follow: residues 46–66 (FGIRFMPPLAIFTLTWQIALG) and 69–89 (LGPAIATALFACGLPLQGLWW).

Belongs to the UPF0208 family.

The protein resides in the cell inner membrane. This is UPF0208 membrane protein YE1335 from Yersinia enterocolitica serotype O:8 / biotype 1B (strain NCTC 13174 / 8081).